The chain runs to 186 residues: Ribosome-recycling factor (186 aa).

The protein belongs to the RRF family.

Its subcellular location is the cytoplasm. Responsible for the release of ribosomes from messenger RNA at the termination of protein biosynthesis. May increase the efficiency of translation by recycling ribosomes from one round of translation to another. The chain is Ribosome-recycling factor from Prosthecochloris aestuarii (strain DSM 271 / SK 413).